A 145-amino-acid polypeptide reads, in one-letter code: Peptidyl-lysine N-acetyltransferase YjaB (145 aa).

Residues 3 to 144 (INIRRSRHEE…KPYPLLNLIY (142 aa)) form the N-acetyltransferase domain.

This sequence belongs to the acetyltransferase family.

It catalyses the reaction L-lysyl-[protein] + acetyl-CoA = N(6)-acetyl-L-lysyl-[protein] + CoA + H(+). Functionally, N-epsilon-lysine acetyltransferase that catalyzes acetylation of a large number of proteins. This is Peptidyl-lysine N-acetyltransferase YjaB (yjaB) from Salmonella typhimurium (strain LT2 / SGSC1412 / ATCC 700720).